A 225-amino-acid polypeptide reads, in one-letter code: MNQDELKQAVAKAALDYIKPHLQSDTILGIGTGSTANYFIDALAEVRTQFEGAVASSEASAERLKKHNIPVYELNSVSGLEFYIDGADETNPRLELIKGGGAALTREKIVAANAKTFICIADESKWVDVLGDFPLPIEVIPMARSYVARELVKLGGDPVYREGCVTDNGNIILDVFNLRILEPVKLEQQINQITGVVTNGLFAMRPADVLLLGSQEGVKTIKVDA.

Residues 32–35, 85–88, and 98–101 each bind substrate; these read TGST, DGAD, and KGGG. The Proton acceptor role is filled by Glu107. Residue Lys125 participates in substrate binding.

The protein belongs to the ribose 5-phosphate isomerase family. Homodimer.

It catalyses the reaction aldehydo-D-ribose 5-phosphate = D-ribulose 5-phosphate. It participates in carbohydrate degradation; pentose phosphate pathway; D-ribose 5-phosphate from D-ribulose 5-phosphate (non-oxidative stage): step 1/1. In terms of biological role, catalyzes the reversible conversion of ribose-5-phosphate to ribulose 5-phosphate. This Hahella chejuensis (strain KCTC 2396) protein is Ribose-5-phosphate isomerase A.